Consider the following 230-residue polypeptide: Small ribosomal subunit protein uS7B (230 aa).

Positions 1–22 (MSEEVVESSSQEASQVIPQEQE) are disordered. The span at 7 to 16 (ESSSQEASQV) shows a compositional bias: low complexity.

It belongs to the universal ribosomal protein uS7 family.

The protein is Small ribosomal subunit protein uS7B (RpS5b) of Drosophila melanogaster (Fruit fly).